The primary structure comprises 243 residues: Cell division protein ZipA (243 aa).

Topologically, residues 1 to 4 (MSDV) are periplasmic. A helical transmembrane segment spans residues 5-25 (TLLRIGIAIVGILFVAAVFFF). Residues 26–243 (STPKTSAHRV…VPPLIKNSRW (218 aa)) lie on the Cytoplasmic side of the membrane. The tract at residues 32 to 89 (AHRVRTKKEEPPRERREPMLSTEVDNSPHQSVDEVPASVPQQQVNPEATKPGEIELGK) is disordered. Residues 38 to 49 (KKEEPPRERREP) are compositionally biased toward basic and acidic residues.

The protein belongs to the ZipA family. Interacts with FtsZ via their C-terminal domains.

The protein localises to the cell inner membrane. In terms of biological role, essential cell division protein that stabilizes the FtsZ protofilaments by cross-linking them and that serves as a cytoplasmic membrane anchor for the Z ring. Also required for the recruitment to the septal ring of downstream cell division proteins. In Xylella fastidiosa (strain Temecula1 / ATCC 700964), this protein is Cell division protein ZipA.